The following is a 397-amino-acid chain: Phosphoglycerate kinase (397 aa).

Residues 23–25, Arg-38, 61–64, Arg-122, and Arg-155 contribute to the substrate site; these read DFN and HMGK. Residues Lys-206, Gly-296, Glu-327, and 353–356 contribute to the ATP site; that span reads GGDS.

It belongs to the phosphoglycerate kinase family. In terms of assembly, monomer.

It localises to the cytoplasm. It catalyses the reaction (2R)-3-phosphoglycerate + ATP = (2R)-3-phospho-glyceroyl phosphate + ADP. Its pathway is carbohydrate degradation; glycolysis; pyruvate from D-glyceraldehyde 3-phosphate: step 2/5. This Clostridium perfringens (strain ATCC 13124 / DSM 756 / JCM 1290 / NCIMB 6125 / NCTC 8237 / Type A) protein is Phosphoglycerate kinase.